The chain runs to 438 residues: Exosome complex component RRP45 (438 aa).

The residue at position 65 (serine 65) is a Phosphoserine. At lysine 297 the chain carries N6-acetyllysine; alternate. Lysine 297 is covalently cross-linked (Glycyl lysine isopeptide (Lys-Gly) (interchain with G-Cter in SUMO1); alternate). A Glycyl lysine isopeptide (Lys-Gly) (interchain with G-Cter in SUMO2); alternate cross-link involves residue lysine 297. Phosphoserine is present on residues serine 306 and serine 346. 2 disordered regions span residues 337–365 (AQIG…GGID) and 377–438 (TGEV…RTAN). The span at 349–364 (DLEDSEKEEEEEEGGI) shows a compositional bias: acidic residues. Residues serine 393 and serine 395 each carry the phosphoserine modification. Residues 427 to 438 (QGKRKKKKRTAN) show a composition bias toward basic residues.

It belongs to the RNase PH family. In terms of assembly, component of the RNA exosome core complex (Exo-9), composed of EXOSC1, EXOSC2, EXOSC3, EXOSC4, EXOSC5, EXOSC6, EXOSC7, EXOSC8 and EXOSC9; within the complex interacts with EXOSC3, EXOSC4, EXOSC5 and DIS3. The catalytically inactive RNA exosome core complex (Exo-9) associates with the catalytic subunit EXOSC10/RRP6. Exo-9 may associate with DIS3 to form the nucleolar exosome complex, or DIS3L to form the cytoplasmic exosome complex. Exo-9 is formed by a hexameric base ring consisting of the heterodimers EXOSC4-EXOSC9, EXOSC5-EXOSC8 and EXOSC6-EXOSC7, and a cap ring consisting of EXOSC1, EXOSC2 and EXOSC3. The RNA exosome complex associates with cofactors C1D/RRP47, MPHOSPH6/MPP6 and MTREX/MTR4. Interacts (via C-terminus region) with SETX (via N-terminus domain); the interaction enhances SETX sumoylation. Interacts with DIS3; the interaction is direct.

It localises to the cytoplasm. Its subcellular location is the nucleus. It is found in the nucleolus. The protein resides in the nucleoplasm. Non-catalytic component of the RNA exosome complex which has 3'-&gt;5' exoribonuclease activity and participates in a multitude of cellular RNA processing and degradation events. In the nucleus, the RNA exosome complex is involved in proper maturation of stable RNA species such as rRNA, snRNA and snoRNA, in the elimination of RNA processing by-products and non-coding 'pervasive' transcripts, such as antisense RNA species and promoter-upstream transcripts (PROMPTs), and of mRNAs with processing defects, thereby limiting or excluding their export to the cytoplasm. The RNA exosome may be involved in Ig class switch recombination (CSR) and/or Ig variable region somatic hypermutation (SHM) by targeting AICDA deamination activity to transcribed dsDNA substrates. In the cytoplasm, the RNA exosome complex is involved in general mRNA turnover and specifically degrades inherently unstable mRNAs containing AU-rich elements (AREs) within their 3' untranslated regions, and in RNA surveillance pathways, preventing translation of aberrant mRNAs. It seems to be involved in degradation of histone mRNA. The catalytic inactive RNA exosome core complex of 9 subunits (Exo-9) is proposed to play a pivotal role in the binding and presentation of RNA for ribonucleolysis, and to serve as a scaffold for the association with catalytic subunits and accessory proteins or complexes. EXOSC9 binds to ARE-containing RNAs. In Mus musculus (Mouse), this protein is Exosome complex component RRP45 (Exosc9).